Consider the following 319-residue polypeptide: N-acetylneuraminate lyase (319 aa).

Positions 51 and 52 each coordinate aceneuramate. Y143 functions as the Proton donor in the catalytic mechanism. Catalysis depends on K173, which acts as the Schiff-base intermediate with substrate. Aceneuramate-binding residues include S175, G199, D201, E202, and S218.

Belongs to the DapA family. NanA subfamily. In terms of assembly, homotetramer.

The protein localises to the cytoplasm. The enzyme catalyses aceneuramate = aldehydo-N-acetyl-D-mannosamine + pyruvate. Its pathway is amino-sugar metabolism; N-acetylneuraminate degradation. Its function is as follows. Catalyzes the cleavage of N-acetylneuraminic acid (sialic acid) to form pyruvate and N-acetylmannosamine via a Schiff base intermediate. It prevents sialic acids from being recycled and returning to the cell surface. Involved in the N-glycolylneuraminic acid (Neu5Gc) degradation pathway. In Sus scrofa (Pig), this protein is N-acetylneuraminate lyase.